The following is a 426-amino-acid chain: Histidine--tRNA ligase (426 aa).

The protein belongs to the class-II aminoacyl-tRNA synthetase family. As to quaternary structure, homodimer.

It localises to the cytoplasm. The enzyme catalyses tRNA(His) + L-histidine + ATP = L-histidyl-tRNA(His) + AMP + diphosphate + H(+). In Chlorobium phaeovibrioides (strain DSM 265 / 1930) (Prosthecochloris vibrioformis (strain DSM 265)), this protein is Histidine--tRNA ligase.